The sequence spans 425 residues: tRNA(Ile)-lysidine synthase (425 aa).

Residue 27-32 participates in ATP binding; that stretch reads SGGLDS.

The protein belongs to the tRNA(Ile)-lysidine synthase family.

It localises to the cytoplasm. It catalyses the reaction cytidine(34) in tRNA(Ile2) + L-lysine + ATP = lysidine(34) in tRNA(Ile2) + AMP + diphosphate + H(+). Its function is as follows. Ligates lysine onto the cytidine present at position 34 of the AUA codon-specific tRNA(Ile) that contains the anticodon CAU, in an ATP-dependent manner. Cytidine is converted to lysidine, thus changing the amino acid specificity of the tRNA from methionine to isoleucine. The protein is tRNA(Ile)-lysidine synthase of Streptococcus pneumoniae serotype 19F (strain G54).